The sequence spans 617 residues: Probable translation initiation factor IF-2 (617 aa).

The region spanning 14 to 231 is the tr-type G domain; the sequence is LRQPIVVVLG…VLAGLTQTYL (218 aa). The segment at 23–30 is G1; the sequence is GHVDHGKT. 23-30 contributes to the GTP binding site; that stretch reads GHVDHGKT. A G2 region spans residues 48 to 52; it reads GITQH. The tract at residues 87–90 is G3; the sequence is DTPG. Residues 87–91 and 141–144 each bind GTP; these read DTPGH and NKID. The G4 stretch occupies residues 141 to 144; the sequence is NKID. The G5 stretch occupies residues 209–211; that stretch reads SAR.

It belongs to the TRAFAC class translation factor GTPase superfamily. Classic translation factor GTPase family. IF-2 subfamily.

In terms of biological role, function in general translation initiation by promoting the binding of the formylmethionine-tRNA to ribosomes. Seems to function along with eIF-2. In Aeropyrum pernix (strain ATCC 700893 / DSM 11879 / JCM 9820 / NBRC 100138 / K1), this protein is Probable translation initiation factor IF-2 (infB).